Here is a 769-residue protein sequence, read N- to C-terminus: Serine protease HtrA-like (769 aa).

Residues 1-20 (MDIGKKHVIPKSQYRRKRRE) show a composition bias toward basic residues. Disordered regions lie at residues 1 to 287 (MDIG…DKDN) and 324 to 390 (EDKH…KGRA). Composition is skewed to basic and acidic residues over residues 21–64 (FFHN…ERFK) and 71–108 (LEQR…DVSK). The segment covering 126–137 (YEQNSEATLSTK) has biased composition (polar residues). Positions 138 to 186 (STDKVESTEMRKLSSDKNKVGHEEQHVLSKPSEHDKETRIDSESSRTDS) are enriched in basic and acidic residues. The span at 247–262 (QQSQNEQTKTYTYGDS) shows a compositional bias: polar residues. Positions 264–287 (QNDKSNHENDLSHHTPSISDDKDN) are enriched in basic and acidic residues. Over residues 331-347 (ADSSETVGYQSQSTASH) the composition is skewed to polar residues. Residues 348-364 (RSTEKRNISINDHDKLN) are compositionally biased toward basic and acidic residues. The span at 365–390 (GQKTNTKTSANNNQKKATSKLNKGRA) shows a compositional bias: polar residues. A helical transmembrane segment spans residues 410–430 (LVILMGIIILIVILNAIFNNV). Active-site charge relay system residues include H504, D534, and S619. Residues 680-733 (IASLNSFERQAVKLPGKVKNGVVVDQVDNNGLADQSGLKKGDVITELDGKLLED) enclose the PDZ domain.

It belongs to the peptidase S1C family.

It is found in the cell membrane. The chain is Serine protease HtrA-like from Staphylococcus aureus (strain N315).